The chain runs to 65 residues: Large ribosomal subunit protein bL31 (65 aa).

The Zn(2+) site is built by Cys16, Cys18, Cys36, and Cys39.

Belongs to the bacterial ribosomal protein bL31 family. Type A subfamily. As to quaternary structure, part of the 50S ribosomal subunit. The cofactor is Zn(2+).

In terms of biological role, binds the 23S rRNA. This chain is Large ribosomal subunit protein bL31, found in Geotalea uraniireducens (strain Rf4) (Geobacter uraniireducens).